Here is a 704-residue protein sequence, read N- to C-terminus: MSQVTTSYSYDAPTDFINFSSLTDEEDMQHIDSWFDEKANLENKFTGKDGTGGLYQGKTPLRKANLHRDVTPLRPVDNTYNKQAEKENLVEESIPSNECPSMKVKETTSRNNPVQPQRRSLRLSAKKNLEQKEKQHVKMKAKRCGTPVIINEFPPSKKMKVQKILKSTEEQELEKRMKMQQEVVEMRKRNEEFKKFALAGAGQPVKKSVSQVTKAVDFHFRTDERVKQHPKNQEEYKEVNFTSELRKHPPSPARVTKGCTIVMPFNLSQGKKRTFDETASTYVPLAQQVEAFHKRTPTRYHLRNRKDDIMPLPSKSVVRICRDPQTPVLQTKHRTRPVTCKSAADLEAEELEKQQQYKFKAQELDPRILEGGPILPKKPPVKPPTQPVGFDLEIEKRIQERESKKKLEEEHYEFHSRPCPTKILEDVVGVPEKKELPITVPKSPAFALKNRIRMPTKEDKEEEEPVMIRAQPVPYFGMPFKPQIPVGRTVEVCPFSFDSRDKERQLQKEKKIKELQKGEVPKFKAHPLPHFDTINLPEKKVKNTTQVEPFCLETDRRGALKAQTWKHQLDEELKQQKEAACFKARPNTVISQEPFVPKREKKSVIEGLSGSLVQEPFQLATEKRAKERQELEKRMAEVEALKAQQLEEARQQEEEQQKEELARLRKELVHKANPIRRYQGVEVKSSDQPLTVPVSPKFSTRFHC.

Phosphothreonine is present on residues Thr59 and Thr71. The segment at 92-119 is disordered; the sequence is ESIPSNECPSMKVKETTSRNNPVQPQRR. The segment covering 109-118 has biased composition (polar residues); it reads SRNNPVQPQR. Phosphoserine is present on residues Ser120 and Ser124. At Lys127 the chain carries N6-acetyllysine. A Phosphothreonine modification is found at Thr146. Phosphoserine occurs at positions 251 and 268. The residue at position 296 (Thr296) is a Phosphothreonine. Position 316 is a phosphoserine (Ser316). At Thr326 the chain carries Phosphothreonine. At Lys332 the chain carries N6-acetyllysine. Residue Lys434 forms a Glycyl lysine isopeptide (Lys-Gly) (interchain with G-Cter in SUMO2) linkage. Ser443 is modified (phosphoserine). At Thr456 the chain carries Phosphothreonine. Glycyl lysine isopeptide (Lys-Gly) (interchain with G-Cter in SUMO2) cross-links involve residues Lys457 and Lys598. Residue Ser695 is modified to Phosphoserine. Lys697 participates in a covalent cross-link: Glycyl lysine isopeptide (Lys-Gly) (interchain with G-Cter in SUMO2).

It belongs to the TPX2 family. Interacts with AURKA. Interacts with importin-alpha; leading to inactivate TPX2. Interacts with HNRNPU; this interaction recruits HNRNPU to spindle microtubules (MTs). Interacts with BCL2L10. Interacts with KIF11.

It is found in the nucleus. The protein localises to the cytoplasm. It localises to the cytoskeleton. Its subcellular location is the spindle. The protein resides in the spindle pole. Spindle assembly factor required for normal assembly of mitotic spindles. Required for normal assembly of microtubules during apoptosis. Required for chromatin and/or kinetochore dependent microtubule nucleation. Mediates AURKA localization to spindle microtubules. Activates AURKA by promoting its autophosphorylation at 'Thr-288' and protects this residue against dephosphorylation. TPX2 is inactivated upon binding to importin-alpha. At the onset of mitosis, GOLGA2 interacts with importin-alpha, liberating TPX2 from importin-alpha, allowing TPX2 to activate AURKA kinase and stimulate local microtubule nucleation. The protein is Targeting protein for Xklp2 (TPX2) of Bos taurus (Bovine).